The primary structure comprises 207 residues: A disintegrin and metalloproteinase with thrombospondin motifs 5 (207 aa).

The Peptidase M12B domain maps to 1–74; the sequence is HAAFTVAHEI…GHGNCLLDLP (74 aa). Zn(2+) is bound at residue H8. E9 is a catalytic residue. Residues H12 and H18 each coordinate Zn(2+). 5 disulfide bridges follow: C24–C53, C95–C117, C106–C127, C112–C146, and C140–C151. The Disintegrin domain maps to 83 to 164; it reads ELPGQTYDAS…TKKKYYSTSS (82 aa). N96 is a glycosylation site (N-linked (GlcNAc...) asparagine). A TSP type-1 domain is found at 165 to 205; sequence HGNWGSWGSWGQCSRSCGGGVQFAYRHCNNPAPKNNGRYCT. C-linked (Man) tryptophan glycans are attached at residues W168 and W171. The O-linked (Fuc...) serine glycan is linked to S180.

Zn(2+) is required as a cofactor. In terms of processing, the precursor is cleaved by furin and PCSK7 outside of the cell. Post-translationally, glycosylated. Can be O-fucosylated by POFUT2 on a serine or a threonine residue found within the consensus sequence C1-X(2)-(S/T)-C2-G of the TSP type-1 repeat domains where C1 and C2 are the first and second cysteine residue of the repeat, respectively. Fucosylated repeats can then be further glycosylated by the addition of a beta-1,3-glucose residue by the glucosyltransferase, B3GALTL. Fucosylation mediates the efficient secretion of ADAMTS family members. Can also be C-glycosylated with one or two mannose molecules on tryptophan residues within the consensus sequence W-X-X-W of the TPRs, and N-glycosylated. These other glycosylations can also facilitate secretion.

It localises to the secreted. The protein resides in the extracellular space. Its subcellular location is the extracellular matrix. Its function is as follows. Metalloproteinase that plays an important role in connective tissue organization, development, inflammation and cell migration. Extracellular matrix (ECM) degrading enzyme that shows proteolytic activity toward the hyalectan group of chondroitin sulfate proteoglycans (CSPGs) including ACAN, VCAN, BCAN and NCAN. Cleavage within the hyalectans occurs at Glu-Xaa recognition motifs. Plays a role in embryonic development, including limb and cardiac morphogenesis, and skeletal muscle development through its VCAN remodeling properties. Cleaves VCAN in the pericellular matrix surrounding myoblasts, facilitating myoblast contact and fusion which is required for skeletal muscle development and regeneration. Participates in the development of brown adipose tissue and browning of white adipose tissue. Plays an important role for T-lymphocyte migration from draining lymph nodes following viral infection. This Bos taurus (Bovine) protein is A disintegrin and metalloproteinase with thrombospondin motifs 5 (ADAMTS5).